Reading from the N-terminus, the 199-residue chain is Pneumococcal vaccine antigen A homolog (199 aa).

Its subcellular location is the cell surface. The sequence is that of Pneumococcal vaccine antigen A homolog (pvaA) from Streptococcus pyogenes serotype M1.